We begin with the raw amino-acid sequence, 155 residues long: Riboflavin kinase (155 aa).

Residues Gly-15, Lys-21, Thr-27, and Asn-29 each contribute to the ATP site. 2 residues coordinate Mg(2+): Thr-27 and Asn-29. Glu-79 functions as the Nucleophile in the catalytic mechanism. 3 residues coordinate ATP: Ile-82, His-84, and Tyr-91. FMN contacts are provided by Arg-104, Lys-107, and Phe-109.

In terms of assembly, monomer. Directly interacts with TNFRSF1A death domain; this interaction may be supported by TRADD. In the absence of TNFRSF1A, interacts with TRADD. Independently of TNFRSF1A, interacts with the NADPH oxidase subunit CYBA. Requires Zn(2+) as cofactor. Mg(2+) serves as cofactor.

It localises to the cytoplasm. It carries out the reaction riboflavin + ATP = FMN + ADP + H(+). Its pathway is cofactor biosynthesis; FMN biosynthesis; FMN from riboflavin (ATP route): step 1/1. Functionally, catalyzes the phosphorylation of riboflavin (vitamin B2) to form flavin-mononucleotide (FMN), hence rate-limiting enzyme in the synthesis of FAD. Essential for TNF-induced reactive oxygen species (ROS) production. Through its interaction with both TNFRSF1A and CYBA, physically and functionally couples TNFRSF1A to NADPH oxidase. TNF-activation of RFK may enhance the incorporation of FAD in NADPH oxidase, a critical step for the assembly and activation of NADPH oxidase. The protein is Riboflavin kinase (Rfk) of Mus musculus (Mouse).